The following is a 425-amino-acid chain: Enolase (425 aa).

Q170 contacts (2R)-2-phosphoglycerate. Catalysis depends on E214, which acts as the Proton donor. Mg(2+)-binding residues include D250, E291, and D317. The (2R)-2-phosphoglycerate site is built by K342, R371, S372, and K393. K342 acts as the Proton acceptor in catalysis.

It belongs to the enolase family. Mg(2+) serves as cofactor.

It is found in the cytoplasm. The protein resides in the secreted. Its subcellular location is the cell surface. The enzyme catalyses (2R)-2-phosphoglycerate = phosphoenolpyruvate + H2O. It participates in carbohydrate degradation; glycolysis; pyruvate from D-glyceraldehyde 3-phosphate: step 4/5. Functionally, catalyzes the reversible conversion of 2-phosphoglycerate (2-PG) into phosphoenolpyruvate (PEP). It is essential for the degradation of carbohydrates via glycolysis. The protein is Enolase of Methanococcoides burtonii (strain DSM 6242 / NBRC 107633 / OCM 468 / ACE-M).